Here is a 354-residue protein sequence, read N- to C-terminus: CX3C chemokine receptor 1 (354 aa).

The Extracellular segment spans residues 1–32; the sequence is MPTSFPELDLENFEYDDSAEACYLGDIVAFGT. The helical transmembrane segment at 33–60 threads the bilayer; it reads IFLSIFYSLVFTFGLVGNLLVVLALTNS. The Cytoplasmic portion of the chain corresponds to 61-70; it reads RKSKSITDIY. A helical membrane pass occupies residues 71-91; sequence LLNLALSDLLFVATLPFWTHY. The Extracellular portion of the chain corresponds to 92 to 104; the sequence is LISHEGLHNAMCK. Residues Cys103 and Cys176 are joined by a disulfide bond. Residues 105-126 traverse the membrane as a helical segment; sequence LTTAFFFIGFFGGIFFITVISI. The Cytoplasmic portion of the chain corresponds to 127-143; the sequence is DRYLAIVLAANSMNNRT. The chain crosses the membrane as a helical span at residues 144-168; it reads VQHGVTISLGVWAAAILVASPQFMF. At 169 to 196 the chain is on the extracellular side; the sequence is TKRKDNECLGDYPEVLQEIWPVLRNSEV. The chain crosses the membrane as a helical span at residues 197-216; the sequence is NILGFVLPLLIMSFCYFRIV. Residues 217–232 lie on the Cytoplasmic side of the membrane; it reads RTLFSCKNRKKARAIR. A helical membrane pass occupies residues 233-257; the sequence is LILLVVVVFFLFWTPYNIVIFLETL. Residues 258–274 lie on the Extracellular side of the membrane; the sequence is KFYNFFPSCGMKRDLRW. A helical membrane pass occupies residues 275-298; that stretch reads ALSVTETVAFSHCCLNPFIYAFAG. The Cytoplasmic segment spans residues 299 to 354; it reads EKFRRYLRHLYNKCLAVLCGRPVHAGFSTESQRSRQDSILSSLTHYTSEGEGSLLL. Thr345 is modified (phosphothreonine).

The protein belongs to the G-protein coupled receptor 1 family. As to quaternary structure, found in a ternary complex with CX3CL1 and ITGAV:ITGB3 or ITGA4:ITGB1. In terms of processing, this protein is not N-glycosylated which is unusual for G-protein-coupled receptors. Most abundant in adult spinal cord, brain, kidney, gut, uterus and testes.

The protein resides in the cell membrane. In terms of biological role, receptor for the C-X3-C chemokine fractalkine (CX3CL1) present on many early leukocyte cells; CX3CR1-CX3CL1 signaling exerts distinct functions in different tissue compartments, such as immune response, inflammation, cell adhesion and chemotaxis. CX3CR1-CX3CL1 signaling mediates cell migratory functions. Responsible for the recruitment of natural killer (NK) cells to inflamed tissues. Acts as a regulator of inflammation process leading to atherogenesis by mediating macrophage and monocyte recruitment to inflamed atherosclerotic plaques, promoting cell survival. Involved in airway inflammation by promoting interleukin 2-producing T helper (Th2) cell survival in inflamed lung. Involved in the migration of circulating monocytes to non-inflamed tissues, where they differentiate into macrophages and dendritic cells. Acts as a negative regulator of angiogenesis, probably by promoting macrophage chemotaxis. Plays a key role in brain microglia by regulating inflammatory response in the central nervous system (CNS) and regulating synapse maturation. Required to restrain the microglial inflammatory response in the CNS and the resulting parenchymal damage in response to pathological stimuli. Involved in brain development by participating in synaptic pruning, a natural process during which brain microglia eliminates extra synapses during postnatal development. Synaptic pruning by microglia is required to promote the maturation of circuit connectivity during brain development. Acts as an important regulator of the gut microbiota by controlling immunity to intestinal bacteria and fungi. Expressed in lamina propria dendritic cells in the small intestine, which form transepithelial dendrites capable of taking up bacteria in order to provide defense against pathogenic bacteria. Required to initiate innate and adaptive immune responses against dissemination of commensal fungi (mycobiota) component of the gut: expressed in mononuclear phagocytes (MNPs) and acts by promoting induction of antifungal IgG antibodies response to confer protection against disseminated C.albicans or C.auris infection. Also acts as a receptor for C-C motif chemokine CCL26, inducing cell chemotaxis. In Rattus norvegicus (Rat), this protein is CX3C chemokine receptor 1.